A 150-amino-acid chain; its full sequence is MKYQQLENLESGWKWKYLVKKHREGELITRYIESSAAQVAVDELLLMENRPVDVLQWIDLHINPKLENRMKQTIRARRKRHFNAEHQHTRKKSIDLEYLVWQRLAALAQRRDSTLSETIVQLIEDAERKEQYANQMSSLKHDLQAILGKS.

Belongs to the MatP family. In terms of assembly, homodimer.

The protein resides in the cytoplasm. Its function is as follows. Required for spatial organization of the terminus region of the chromosome (Ter macrodomain) during the cell cycle. Prevents early segregation of duplicated Ter macrodomains during cell division. Binds specifically to matS, which is a 13 bp signature motif repeated within the Ter macrodomain. This is Macrodomain Ter protein from Erwinia tasmaniensis (strain DSM 17950 / CFBP 7177 / CIP 109463 / NCPPB 4357 / Et1/99).